The following is a 287-amino-acid chain: ATP synthase gamma chain (287 aa).

The protein belongs to the ATPase gamma chain family. In terms of assembly, F-type ATPases have 2 components, CF(1) - the catalytic core - and CF(0) - the membrane proton channel. CF(1) has five subunits: alpha(3), beta(3), gamma(1), delta(1), epsilon(1). CF(0) has three main subunits: a, b and c.

It localises to the cell inner membrane. In terms of biological role, produces ATP from ADP in the presence of a proton gradient across the membrane. The gamma chain is believed to be important in regulating ATPase activity and the flow of protons through the CF(0) complex. This is ATP synthase gamma chain from Klebsiella pneumoniae subsp. pneumoniae (strain ATCC 700721 / MGH 78578).